Reading from the N-terminus, the 430-residue chain is GTPase Obg (430 aa).

The Obg domain occupies 1–158 (MFIDTAKVFV…LNIVLELKLL (158 aa)). The OBG-type G domain maps to 159-331 (ADVGLLGFPN…VMKEAARILK (173 aa)). Residues 165 to 172 (GFPNVGKS), 190 to 194 (FTTLK), 212 to 215 (DIPG), 282 to 285 (NKSD), and 312 to 314 (SAA) each bind GTP. The Mg(2+) site is built by Ser-172 and Thr-192. An OCT domain is found at 345-430 (MYIPEEKRFT…LNDFEFEYIL (86 aa)).

This sequence belongs to the TRAFAC class OBG-HflX-like GTPase superfamily. OBG GTPase family. Monomer. Requires Mg(2+) as cofactor.

It is found in the cytoplasm. In terms of biological role, an essential GTPase which binds GTP, GDP and possibly (p)ppGpp with moderate affinity, with high nucleotide exchange rates and a fairly low GTP hydrolysis rate. Plays a role in control of the cell cycle, stress response, ribosome biogenesis and in those bacteria that undergo differentiation, in morphogenesis control. The protein is GTPase Obg of Clostridium beijerinckii (strain ATCC 51743 / NCIMB 8052) (Clostridium acetobutylicum).